Reading from the N-terminus, the 30-residue chain is PLPTTRGNPTGPKESKKEVESKTETDPFAW.

Residues 1–30 are disordered; the sequence is PLPTTRGNPTGPKESKKEVESKTETDPFAW. The Cell attachment site signature appears at 6 to 8; the sequence is RGN. Basic and acidic residues predominate over residues 13 to 30; the sequence is KESKKEVESKTETDPFAW.

Belongs to the lentiviruses Tat family. As to quaternary structure, interacts with host CCNT1. Associates with the P-TEFb complex composed at least of Tat, P-TEFb (CDK9 and CCNT1), TAR RNA, RNA Pol II. Recruits the HATs CREBBP, TAF1/TFIID, EP300, PCAF and GCN5L2. Interacts with host KAT5/Tip60; this interaction targets the latter to degradation. Interacts with the host deacetylase SIRT1. Interacts with host capping enzyme RNGTT; this interaction stimulates RNGTT. Binds to host KDR, and to the host integrins ITGAV/ITGB3 and ITGA5/ITGB1. Interacts with host KPNB1/importin beta-1 without previous binding to KPNA1/importin alpha-1. Interacts with EIF2AK2. Interacts with host nucleosome assembly protein NAP1L1; this interaction may be required for the transport of Tat within the nucleus, since the two proteins interact at the nuclear rim. Interacts with host C1QBP/SF2P32; this interaction involves lysine-acetylated Tat. Interacts with the host chemokine receptors CCR2, CCR3 and CXCR4. Interacts with host DPP4/CD26; this interaction may trigger an anti-proliferative effect. Interacts with host LDLR. Interacts with the host extracellular matrix metalloproteinase MMP1. Interacts with host PRMT6; this interaction mediates Tat's methylation. Interacts with, and is ubiquitinated by MDM2/Hdm2. Interacts with host PSMC3 and HTATIP2. Interacts with STAB1; this interaction may overcome SATB1-mediated repression of IL2 and IL2RA (interleukin) in T cells by binding to the same domain than HDAC1. Interacts (when acetylated on Lys-50 and Lys-51) with human CDK13, thereby increasing HIV-1 mRNA splicing and promoting the production of the doubly spliced HIV-1 protein Nef. Acetylation by EP300, CREBBP, GCN5L2/GCN5 and PCAF regulates the transactivation activity of Tat. EP300-mediated acetylation of Lys-50 promotes dissociation of Tat from the TAR RNA through the competitive binding to PCAF's bromodomain. In addition, the non-acetylated Tat's N-terminus can also interact with PCAF. PCAF-mediated acetylation of Lys-28 enhances Tat's binding to CCNT1. Lys-50 is deacetylated by SIRT1. In terms of processing, phosphorylated by EIF2AK2 on serine and threonine residues adjacent to the basic region important for TAR RNA binding and function. Phosphorylation of Tat by EIF2AK2 is dependent on the prior activation of EIF2AK2 by dsRNA. Post-translationally, asymmetrical arginine methylation by host PRMT6 seems to diminish the transactivation capacity of Tat and affects the interaction with host CCNT1. Polyubiquitination by MDM2 does not target Tat to degradation, but activates its transactivation function and fosters interaction with CCNT1 and TAR RNA.

Its subcellular location is the host nucleus. It localises to the host nucleolus. The protein resides in the host cytoplasm. The protein localises to the secreted. Transcriptional activator that increases RNA Pol II processivity, thereby increasing the level of full-length viral transcripts. Recognizes a hairpin structure at the 5'-LTR of the nascent viral mRNAs referred to as the transactivation responsive RNA element (TAR) and recruits the cyclin T1-CDK9 complex (P-TEFb complex) that will in turn hyperphosphorylate the RNA polymerase II to allow efficient elongation. The CDK9 component of P-TEFb and other Tat-activated kinases hyperphosphorylate the C-terminus of RNA Pol II that becomes stabilized and much more processive. Other factors such as HTATSF1/Tat-SF1, SUPT5H/SPT5, and HTATIP2 are also important for Tat's function. Besides its effect on RNA Pol II processivity, Tat induces chromatin remodeling of proviral genes by recruiting the histone acetyltransferases (HATs) CREBBP, EP300 and PCAF to the chromatin. This also contributes to the increase in proviral transcription rate, especially when the provirus integrates in transcriptionally silent region of the host genome. To ensure maximal activation of the LTR, Tat mediates nuclear translocation of NF-kappa-B by interacting with host RELA. Through its interaction with host TBP, Tat may also modulate transcription initiation. Tat can reactivate a latently infected cell by penetrating in it and transactivating its LTR promoter. In the cytoplasm, Tat is thought to act as a translational activator of HIV-1 mRNAs. In terms of biological role, extracellular circulating Tat can be endocytosed by surrounding uninfected cells via the binding to several surface receptors such as CD26, CXCR4, heparan sulfate proteoglycans (HSPG) or LDLR. Neurons are rarely infected, but they internalize Tat via their LDLR. Endosomal low pH allows Tat to cross the endosome membrane to enter the cytosol and eventually further translocate into the nucleus, thereby inducing severe cell dysfunctions ranging from cell activation to cell death. Through its interaction with nuclear HATs, Tat is potentially able to control the acetylation-dependent cellular gene expression. Tat seems to inhibit the HAT activity of KAT5/Tip60 and TAF1, and consequently modify the expression of specific cellular genes. Modulates the expression of many cellular genes involved in cell survival, proliferation or in coding for cytokines (such as IL10) or cytokine receptors. May be involved in the derepression of host interleukin IL2 expression. Mediates the activation of cyclin-dependent kinases and dysregulation of microtubule network. Tat plays a role in T-cell and neurons apoptosis. Tat induced neurotoxicity and apoptosis probably contribute to neuroAIDS. Host extracellular matrix metalloproteinase MMP1 cleaves Tat and decreases Tat's mediated neurotoxicity. Circulating Tat also acts as a chemokine-like and/or growth factor-like molecule that binds to specific receptors on the surface of the cells, affecting many cellular pathways. In the vascular system, Tat binds to ITGAV/ITGB3 and ITGA5/ITGB1 integrins dimers at the surface of endothelial cells and competes with bFGF for heparin-binding sites, leading to an excess of soluble bFGF. Binds to KDR/VEGFR-2. All these Tat-mediated effects enhance angiogenesis in Kaposi's sarcoma lesions. The protein is Protein Tat of Human immunodeficiency virus type 1 group M subtype A (isolate Z321) (HIV-1).